The sequence spans 169 residues: Endoribonuclease YbeY (169 aa).

A disordered region spans residues 72–95 (GPVAAPRQEPDSPPACRKDSSHAE). Residues His131, His135, and His141 each contribute to the Zn(2+) site.

Belongs to the endoribonuclease YbeY family. Requires Zn(2+) as cofactor.

The protein resides in the cytoplasm. Single strand-specific metallo-endoribonuclease involved in late-stage 70S ribosome quality control and in maturation of the 3' terminus of the 16S rRNA. In Oleidesulfovibrio alaskensis (strain ATCC BAA-1058 / DSM 17464 / G20) (Desulfovibrio alaskensis), this protein is Endoribonuclease YbeY.